An 82-amino-acid chain; its full sequence is Sec-independent protein translocase protein TatA (82 aa).

Residues 1–21 traverse the membrane as a helical segment; the sequence is MHPPSITQLLIILLIIVLLFG. The tract at residues 42 to 82 is disordered; the sequence is AVKEDEEDNQSEENTKSQIKQSESKNENVSKTHTDSQKQDT. Positions 63 to 82 are enriched in basic and acidic residues; the sequence is SESKNENVSKTHTDSQKQDT.

Belongs to the TatA/E family. As to quaternary structure, the Tat system comprises two distinct complexes: a TatABC complex, containing multiple copies of TatA, TatB and TatC subunits, and a separate TatA complex, containing only TatA subunits. Substrates initially bind to the TatABC complex, which probably triggers association of the separate TatA complex to form the active translocon.

The protein resides in the cell inner membrane. Functionally, part of the twin-arginine translocation (Tat) system that transports large folded proteins containing a characteristic twin-arginine motif in their signal peptide across membranes. TatA could form the protein-conducting channel of the Tat system. In Helicobacter hepaticus (strain ATCC 51449 / 3B1), this protein is Sec-independent protein translocase protein TatA.